Here is a 470-residue protein sequence, read N- to C-terminus: Glutamate--tRNA ligase 1 (470 aa).

The short motif at 8–18 is the 'HIGH' region element; that stretch reads PSPTGYLHVGG. Positions 250–254 match the 'KMSKS' region motif; sequence KLSKR. Lys253 contacts ATP.

This sequence belongs to the class-I aminoacyl-tRNA synthetase family. Glutamate--tRNA ligase type 1 subfamily. In terms of assembly, monomer.

It localises to the cytoplasm. The catalysed reaction is tRNA(Glu) + L-glutamate + ATP = L-glutamyl-tRNA(Glu) + AMP + diphosphate. Its function is as follows. Catalyzes the attachment of glutamate to tRNA(Glu) in a two-step reaction: glutamate is first activated by ATP to form Glu-AMP and then transferred to the acceptor end of tRNA(Glu). This Pseudothermotoga lettingae (strain ATCC BAA-301 / DSM 14385 / NBRC 107922 / TMO) (Thermotoga lettingae) protein is Glutamate--tRNA ligase 1.